Reading from the N-terminus, the 316-residue chain is Lys-63-specific deubiquitinase BRCC36 (316 aa).

A2 carries the N-acetylalanine modification. An MPN domain is found at 12-179 (VHLESDAFLV…YTCFQSIQAQ (168 aa)). Zn(2+) contacts are provided by H122, H124, and D135. The JAMM motif motif lies at 122 to 135 (HSHPHITVWPSHVD). Residue S258 is modified to Phosphoserine.

The protein belongs to the peptidase M67A family. BRCC36 subfamily. In terms of assembly, component of the ARISC complex, at least composed of UIMC1/RAP80, ABRAXAS1, BRCC3/BRCC36, BABAM2 and BABAM1/NBA1. Component of the BRCA1-A complex, at least composed of BRCA1, BARD1, UIMC1/RAP80, ABRAXAS1, BRCC3/BRCC36, babam2 and BABAM1/NBA1. In the BRCA1-A complex, interacts directly with ABRAXAS1 and babam2. Component of the BRISC complex, at least composed of ABRAXAS2, BRCC3/BRCC36, BABAM2 and BABAM1/NBA1. Identified in a complex with SHMT2 and the other subunits of the BRISC complex. In the BRISC complex, interacts directly with ABRAXAS2. Identified in a complex with ABRAXAS2 and NUMA1. The BRISC complex interacts with the CSN complex. Component of the BRCA1/BRCA2 containing complex (BRCC), which also contains BRCA1, BRCA2, BARD1, BABAM2 and RAD51. BRCC is a ubiquitin E3 ligase complex that enhances cellular survival following DNA damage. Interacts with BRCA1. Binds polyubiquitin. Interacts with PWWP2B. Interacts with HDAC1; this interaction is enhanced in the presence of PWWP2B. Requires Zn(2+) as cofactor. Heart, brain, placenta, lung, liver, skeletal muscle, kidney and pancreas. Aberrantly expressed in the vast majority of breast tumors.

It localises to the nucleus. The protein localises to the cytoplasm. It is found in the cytoskeleton. Its subcellular location is the spindle pole. Its function is as follows. Metalloprotease that specifically cleaves 'Lys-63'-linked polyubiquitin chains. Does not have activity toward 'Lys-48'-linked polyubiquitin chains. Component of the BRCA1-A complex, a complex that specifically recognizes 'Lys-63'-linked ubiquitinated histones H2A and H2AX at DNA lesions sites, leading to target the BRCA1-BARD1 heterodimer to sites of DNA damage at double-strand breaks (DSBs). In the BRCA1-A complex, it specifically removes 'Lys-63'-linked ubiquitin on histones H2A and H2AX, antagonizing the RNF8-dependent ubiquitination at double-strand breaks (DSBs). Catalytic subunit of the BRISC complex, a multiprotein complex that specifically cleaves 'Lys-63'-linked ubiquitin in various substrates. Mediates the specific 'Lys-63'-specific deubiquitination associated with the COP9 signalosome complex (CSN), via the interaction of the BRISC complex with the CSN complex. The BRISC complex is required for normal mitotic spindle assembly and microtubule attachment to kinetochores via its role in deubiquitinating NUMA1. Plays a role in interferon signaling via its role in the deubiquitination of the interferon receptor IFNAR1; deubiquitination increases IFNAR1 activity by enhancing its stability and cell surface expression. Acts as a regulator of the NLRP3 inflammasome by mediating deubiquitination of NLRP3, leading to NLRP3 inflammasome assembly. Down-regulates the response to bacterial lipopolysaccharide (LPS) via its role in IFNAR1 deubiquitination. Deubiquitinates HDAC1 and PWWP2B leading to their stabilization. In Homo sapiens (Human), this protein is Lys-63-specific deubiquitinase BRCC36 (BRCC3).